We begin with the raw amino-acid sequence, 477 residues long: Leukotoxin export protein LtxD (477 aa).

Residues 64 to 84 form a helical membrane-spanning segment; sequence IMLFLTLAIIVSIFSNVEIIA. A coiled-coil region spans residues 206–287; that stretch reads LNLNKKEAEK…ENEVLLAKEE (82 aa).

This sequence belongs to the membrane fusion protein (MFP) (TC 8.A.1) family. As to quaternary structure, probably part of a complex composed of LtxB, LtxD and TdeA, which forms a single transport channel across the two membranes.

It localises to the cell inner membrane. Its function is as follows. Involved in the export of the LtxA leukotoxin. The protein is Leukotoxin export protein LtxD of Aggregatibacter actinomycetemcomitans (Actinobacillus actinomycetemcomitans).